The following is a 362-amino-acid chain: MKSALKTFVPGALALLLLFPVAAQAKEVETKTKLANVVILATGGTIAGAGASAANSATYQAAKVGIEQLIAGVPELSQIANVRGEQVMQIASESINNENLLQLGRRVAELADSKDVDGIVITHGTDTLEETAYFLNLVEKTDKPIIVVGSMRPGTAMSADGMLNLYNAVAVAGSKDARGKGVLVTMNDEIQSGRDVSKMINIKTEAFKSPWGPLGMVVEGKSYWFRLPAKRHTMDSEFDIKTIKSLPDVEIAYGYGNVSDTAVKALAQAGAKAIIHAGTGNGSVSSKVVPALQELRKQGVQIIRSSHVNAGGFVLRNAEQPDDKYDWVVAHDLNPQKARILAMVALTKTQDSKELQRMFWEY.

The first 25 residues, 1–25 (MKSALKTFVPGALALLLLFPVAAQA), serve as a signal peptide directing secretion. One can recognise an Asparaginase/glutaminase domain in the interval 35–362 (ANVVILATGG…KELQRMFWEY (328 aa)). The Acyl-ester intermediate role is filled by Thr-45. Substrate contacts are provided by residues Ser-92 and 125-126 (TD).

The protein belongs to the asparaginase 1 family. As to quaternary structure, homotetramer.

It localises to the periplasm. The enzyme catalyses L-glutamine + H2O = L-glutamate + NH4(+). It carries out the reaction L-asparagine + H2O = L-aspartate + NH4(+). This is Glutaminase-asparaginase from Pseudomonas fluorescens biotype A.